The following is a 427-amino-acid chain: Serine--tRNA ligase (427 aa).

Position 235 to 237 (235 to 237 (TAE)) interacts with L-serine. ATP contacts are provided by residues 266–268 (RRE) and valine 282. L-serine is bound at residue glutamate 289. 353 to 356 (EASS) is an ATP binding site. Serine 389 provides a ligand contact to L-serine.

The protein belongs to the class-II aminoacyl-tRNA synthetase family. Type-1 seryl-tRNA synthetase subfamily. As to quaternary structure, homodimer. The tRNA molecule binds across the dimer.

The protein resides in the cytoplasm. It carries out the reaction tRNA(Ser) + L-serine + ATP = L-seryl-tRNA(Ser) + AMP + diphosphate + H(+). The enzyme catalyses tRNA(Sec) + L-serine + ATP = L-seryl-tRNA(Sec) + AMP + diphosphate + H(+). It functions in the pathway aminoacyl-tRNA biosynthesis; selenocysteinyl-tRNA(Sec) biosynthesis; L-seryl-tRNA(Sec) from L-serine and tRNA(Sec): step 1/1. In terms of biological role, catalyzes the attachment of serine to tRNA(Ser). Is also able to aminoacylate tRNA(Sec) with serine, to form the misacylated tRNA L-seryl-tRNA(Sec), which will be further converted into selenocysteinyl-tRNA(Sec). This Chlorobaculum parvum (strain DSM 263 / NCIMB 8327) (Chlorobium vibrioforme subsp. thiosulfatophilum) protein is Serine--tRNA ligase.